A 1569-amino-acid chain; its full sequence is MEAQSRSTTASEKKKVENSIVKGHSRTEVSEKAVASSTTSNEDESPGQTYHRERRNAIAMQPQGGQGLGKISEEPSTSSEERASLIKKELHGSITHLPEPSVPYRGTVFAMDPRNGYIDPHYRSDLDLFPAFHPPVPIDARHHEGRYHYEPTPIPPLHVPTALASSPTYPDLPFFRISPHRNPASASDSPFSPPHPYISPYMDYIRSLHSSPSLSMISAARGLSPTDVPHAGISPAEYYHQMALLAGQRSPYADIFPSPATAGAGANALHMEYLHAMESSRFSSPRLSARPSRKRTLSISPLSDHSFDLQTMIRNSPNSLVTILNNSRSSSSASGSYGHLAASAISPALNFAYQPTPVSLQQMHQQIMSRQHSIGSAFGHSPPLLHPAPTFPSQRTIPGIPSVLNPVQVSIGPSEAAQQNKPTSESAVSSTGDLLHNKRSKVKPEEDHPSPGAVCIQDQPDGMTLVKEEGVKDESKQEAEVVYETNCHWEGCSREFDTQEQLVHHINNDHIHGEKKEFVCRWLDCSREQKPFKAQYMLVVHMRRHTGEKPHKCTFEGCSKAYSRLENLKTHLRSHTGEKPYVCEHEGCNKAFSNASDRAKHQNRTHSNEKPYVCKIPGCTKRYTDPSSLRKHVKTVHGPEAHVTKKQRGDIHPRPPPPREPGSHSQSRSPGQQTQGIHGEHKDLSNTTSKHEECLQVRSVKTEKPMSSQPSPGGKSSCSRQQSPISNYTNSGIELNLNSGGSIGDFSALDETPIMDSTISTATTGLGLHGRRVMTGTKWMEQIKVEKMKQVNGMLPRLNPVPPHRAPTLPPITGNGVQLNSNISLGGLAPVLPNRNDLSSMDITVLNMLNRRDSNTSTISSAYMSSRRSSGISPCFSSRRSSEASQFEGRVQNLSVAGSYDPISTDASRRSSETSQCDGLPTLLSLTPAQQYRLKAKYAAATGGPPPTPLPNMERMSLKTRMALLGDSRDCRLSPLPSVNVPRRCSDGGVGSYGRRHLLPNELQVNGMRRASDPVKMVSDNVSNTRVVRFNSLNNVIPPDVPPPMERRNLSLQNYTRNVYSPCPPSISENVALEAMIMEAEGNFDDEDLLPDDMVQYLNSRNQRLYETIETDALQNNAGERNGNNFEQSHVTSNVINEQFHSSEQTDLIENKNDLPIQWNEVSSGSAEYSPSRLKYGQRFPTQQNQPFGLYNNMMVQQQNVPKSGLSQQRGYQHHTQNNPQAPQQNLDLYNNSNVWSGQLGRGNQYIDDIERSSLGHSATGSLCNSAARGQKLTTNGLPMNTGQQNFGPSTHYSVQSANRAEVVQNENIINQEFMQQMTAEHLIYGMHLLGVTRSNQTTSGQNGNTTDGTRSFLSTTQNGGEQQPTLAKNFQSFVNSSGNSRQNLHRNNLPYLQEQIYDTNQHIFKVNSIKMEMQSHPQQHCANAQNFSGQLYDQTATYPQQIMKSGSEPGMEANCLLQESNNTNSSKLLSPGANHVTSTVDNIDNSLAGVQIAFAAIIDDGDHASLISGVLSPSIIQNLSRNSSRLTTPRASLTFPAIPVSTSNMAIGDMSSLLTSLAEESKFLAIMQ.

Polar residues-rich tracts occupy residues 1-10 (MEAQSRSTTA) and 416-432 (AAQQ…SSTG). 2 disordered regions span residues 1 to 79 (MEAQ…STSS) and 414 to 461 (SEAA…DQPD). 5 C2H2-type zinc fingers span residues 485–510 (TNCH…NNDH), 518–545 (FVCR…MRRH), 551–575 (HKCT…LRSH), 581–606 (YVCE…NRTH), and 612–637 (YVCK…KTVH). 4 disordered regions span residues 625–731 (DPSS…YTNS), 899–921 (SYDP…DGLP), 1202–1228 (PKSG…QNLD), and 1335–1364 (SNQT…GEQQ). Positions 637 to 653 (HGPEAHVTKKQRGDIHP) are enriched in basic and acidic residues. Positions 663-676 (SHSQSRSPGQQTQG) are enriched in polar residues. The segment covering 678–704 (HGEHKDLSNTTSKHEECLQVRSVKTEK) has biased composition (basic and acidic residues). A compositionally biased stretch (polar residues) spans 705 to 731 (PMSSQPSPGGKSSCSRQQSPISNYTNS). Over residues 1335 to 1350 (SNQTTSGQNGNTTDGT) the composition is skewed to low complexity. The segment covering 1352 to 1364 (SFLSTTQNGGEQQ) has biased composition (polar residues).

Belongs to the GLI C2H2-type zinc-finger protein family. Phosphorylation is essential for its proteolytic processing. Post-translationally, the repressor form (GLI3R), a C-terminally truncated form is generated from the full-length GLI3 protein (GLI3FL) through proteolytic processing.

It is found in the nucleus. Its subcellular location is the cytoplasm. Its function is as follows. Has a dual function as a transcriptional activator and a repressor of the sonic hedgehog (Shh) pathway, and may play a role in limb development. May bind to the minimal GLI-consensus sequence 5'-GGGTGGTC-3'. Has an essential role in the early embryonic patterning of mesoderm and neuroectoderm. In Xenopus laevis (African clawed frog), this protein is Zinc finger protein GLI3 (gli3).